Here is a 274-residue protein sequence, read N- to C-terminus: Light-independent protochlorophyllide reductase iron-sulfur ATP-binding protein (274 aa).

ATP is bound by residues 12–17 (GIGKST) and Lys41. Ser16 serves as a coordination point for Mg(2+). [4Fe-4S] cluster contacts are provided by Cys97 and Cys131.

The protein belongs to the NifH/BchL/ChlL family. Homodimer. Protochlorophyllide reductase is composed of three subunits; BchL, BchN and BchB. [4Fe-4S] cluster is required as a cofactor.

The catalysed reaction is chlorophyllide a + oxidized 2[4Fe-4S]-[ferredoxin] + 2 ADP + 2 phosphate = protochlorophyllide a + reduced 2[4Fe-4S]-[ferredoxin] + 2 ATP + 2 H2O. It participates in porphyrin-containing compound metabolism; bacteriochlorophyll biosynthesis (light-independent). Its function is as follows. Component of the dark-operative protochlorophyllide reductase (DPOR) that uses Mg-ATP and reduced ferredoxin to reduce ring D of protochlorophyllide (Pchlide) to form chlorophyllide a (Chlide). This reaction is light-independent. The L component serves as a unique electron donor to the NB-component of the complex, and binds Mg-ATP. In Chloroherpeton thalassium (strain ATCC 35110 / GB-78), this protein is Light-independent protochlorophyllide reductase iron-sulfur ATP-binding protein.